We begin with the raw amino-acid sequence, 792 residues long: Ribonucleoside-diphosphate reductase large subunit (792 aa).

An ATP-cone domain is found at 1–92 (MHVIKRDGRQ…VSNLHKETKK (92 aa)). ATP-binding positions include 5–6 (KR), 11–17 (ERVMFDK), Thr53, and Asp57. Lys17 is subject to N6-acetyllysine. Ser202 and Ser217 together coordinate GDP. Cys218 and Cys444 are joined by a disulfide. Residues 226–228 (DSI), Lys243, Arg256, and 263–264 (AG) each bind dTTP. The residue at position 376 (Lys376) is an N6-acetyllysine. Asn427 contributes to the GDP binding site. Asn427 serves as the catalytic Proton acceptor. Cys429 functions as the Cysteine radical intermediate in the catalytic mechanism. Residues Glu431 and 604–607 (TAST) each bind GDP. Glu431 serves as the catalytic Proton acceptor. Residue Thr751 is modified to Phosphothreonine.

It belongs to the ribonucleoside diphosphate reductase large chain family. In terms of assembly, heterodimer of a large and a small subunit. Heterodimer with small subunit RRM2 or RRM2B. The heterodimer with RRM2 has higher catalytic activity than the heterodimer with RRM2B. Interacts with AHCYL1 which inhibits its activity.

The protein localises to the cytoplasm. The catalysed reaction is a 2'-deoxyribonucleoside 5'-diphosphate + [thioredoxin]-disulfide + H2O = a ribonucleoside 5'-diphosphate + [thioredoxin]-dithiol. Its activity is regulated as follows. Under complex allosteric control mediated by deoxynucleoside triphosphates and ATP binding to separate specificity and activation sites on the M1 subunit. The type of nucleotide bound at the specificity site determines substrate preference. It seems probable that ATP makes the enzyme reduce CDP and UDP, dGTP favors ADP reduction and dTTP favors GDP reduction. Stimulated by ATP and inhibited by dATP binding to the activity site, the dATP inhibition is mediated by AHCYL1 which stabilizes dATP in the site. In terms of biological role, provides the precursors necessary for DNA synthesis. Catalyzes the biosynthesis of deoxyribonucleotides from the corresponding ribonucleotides. The sequence is that of Ribonucleoside-diphosphate reductase large subunit (RRM1) from Homo sapiens (Human).